The chain runs to 157 residues: Ribosomal RNA large subunit methyltransferase H (157 aa).

S-adenosyl-L-methionine contacts are provided by residues Leu73, Gly105, and 124 to 129 (MSKMTF).

It belongs to the RNA methyltransferase RlmH family. Homodimer.

The protein localises to the cytoplasm. It catalyses the reaction pseudouridine(1915) in 23S rRNA + S-adenosyl-L-methionine = N(3)-methylpseudouridine(1915) in 23S rRNA + S-adenosyl-L-homocysteine + H(+). In terms of biological role, specifically methylates the pseudouridine at position 1915 (m3Psi1915) in 23S rRNA. This chain is Ribosomal RNA large subunit methyltransferase H, found in Bacteroides fragilis (strain ATCC 25285 / DSM 2151 / CCUG 4856 / JCM 11019 / LMG 10263 / NCTC 9343 / Onslow / VPI 2553 / EN-2).